A 367-amino-acid chain; its full sequence is MNIHTPGLELTPDRDEAQAALDVLRQWAKQATPAEISELDPSVARLVPGMDGVEYPALSREYPSDFSLDDGYKETLPDLQNGPSSLIRGTKQQIQHVGISNFRLPIRFHTRSGGDITLETSVTGSVSLEADKKGINMSRIMRSFYKHAEETFSFEVIEAALDAYINDLESFDARIQMRFSFPMKVDSLRSGLSGYQYYDIALELVDQGGVRKKIMHLDYVYSSTCPCSLELSEHARATRGQLATPHSQRSVARISVEVENDGQCLWFEDLIEACRRAVPTETQVMVKREDEQAFAELNAANPIFVEDAARLFCEQLHSDTRIGDFRVIASHQESLHSHDAVSVLMEGETFKSESLDPKLFNTLFHVG.

This sequence belongs to the GTP cyclohydrolase IV family.

It catalyses the reaction GTP + H2O = 7,8-dihydroneopterin 3'-triphosphate + formate + H(+). Its pathway is cofactor biosynthesis; 7,8-dihydroneopterin triphosphate biosynthesis; 7,8-dihydroneopterin triphosphate from GTP: step 1/1. Functionally, converts GTP to 7,8-dihydroneopterin triphosphate. The sequence is that of GTP cyclohydrolase FolE2 from Roseobacter denitrificans (strain ATCC 33942 / OCh 114) (Erythrobacter sp. (strain OCh 114)).